Reading from the N-terminus, the 265-residue chain is NAD kinase 2 (265 aa).

D51 serves as the catalytic Proton acceptor. NAD(+)-binding positions include 51–52, 122–123, R149, D151, 162–167, and A186; these read DG, NE, and TAYNKS.

Belongs to the NAD kinase family. The cofactor is a divalent metal cation.

The protein resides in the cytoplasm. It catalyses the reaction NAD(+) + ATP = ADP + NADP(+) + H(+). Functionally, involved in the regulation of the intracellular balance of NAD and NADP, and is a key enzyme in the biosynthesis of NADP. Catalyzes specifically the phosphorylation on 2'-hydroxyl of the adenosine moiety of NAD to yield NADP. This Bacillus licheniformis (strain ATCC 14580 / DSM 13 / JCM 2505 / CCUG 7422 / NBRC 12200 / NCIMB 9375 / NCTC 10341 / NRRL NRS-1264 / Gibson 46) protein is NAD kinase 2.